A 301-amino-acid chain; its full sequence is tRNA-cytidine(32) 2-sulfurtransferase (301 aa).

The PP-loop motif signature appears at 47 to 52 (SGGKDS). [4Fe-4S] cluster-binding residues include Cys122, Cys125, and Cys213.

It belongs to the TtcA family. Homodimer. It depends on Mg(2+) as a cofactor. Requires [4Fe-4S] cluster as cofactor.

It localises to the cytoplasm. It carries out the reaction cytidine(32) in tRNA + S-sulfanyl-L-cysteinyl-[cysteine desulfurase] + AH2 + ATP = 2-thiocytidine(32) in tRNA + L-cysteinyl-[cysteine desulfurase] + A + AMP + diphosphate + H(+). Its pathway is tRNA modification. Functionally, catalyzes the ATP-dependent 2-thiolation of cytidine in position 32 of tRNA, to form 2-thiocytidine (s(2)C32). The sulfur atoms are provided by the cysteine/cysteine desulfurase (IscS) system. The sequence is that of tRNA-cytidine(32) 2-sulfurtransferase from Photobacterium profundum (strain SS9).